A 417-amino-acid chain; its full sequence is Lactose permease (417 aa).

Methionine 1 bears the N-formylmethionine; partial mark. Topologically, residues 1–7 (MYYLKNT) are cytoplasmic. A helical transmembrane segment spans residues 8–34 (NFWMFGLFFFFYFFIMGAYFPFFPIWL). The Periplasmic segment spans residues 35–41 (HDINHIS). The chain crosses the membrane as a helical span at residues 42–70 (KSDTGIIFAAISLFSLLFQPLFGLLSDKL). Residues 71–74 (GLRK) lie on the Cytoplasmic side of the membrane. The chain crosses the membrane as a helical span at residues 75–100 (YLLWIITGMLVMFAPFFIFIFGPLLQ). Over 101–104 (YNIL) the chain is Periplasmic. Residues 105 to 129 (VGSIVGGIYLGFCFNAGAPAVEAFI) traverse the membrane as a helical segment. Residues 130 to 140 (EKVSRRSNFEF) lie on the Cytoplasmic side of the membrane. A helical transmembrane segment spans residues 141 to 163 (GRARMFGCVGWALCASIVGIMFT). At 164–166 (INN) the chain is on the periplasmic side. A helical membrane pass occupies residues 167–186 (QFVFWLGSGCALILAVLLFF). Residues 187–220 (AKTDAPSSATVANAVGANHSAFSLKLALELFRQP) lie on the Cytoplasmic side of the membrane. Residues 221-249 (KLWFLSLYVIGVSCTYDVFDQQFANFFTS) traverse the membrane as a helical segment. The Periplasmic segment spans residues 250–253 (FFAT). A helical transmembrane segment spans residues 254-278 (GEQGTRVFGYVTTMGELLNASIMFF). Residues 279–288 (APLIINRIGG) lie on the Cytoplasmic side of the membrane. Residues 289-308 (KNALLLAGTIMSVRIIGSSF) traverse the membrane as a helical segment. Over 309-311 (ATS) the chain is Periplasmic. The chain crosses the membrane as a helical span at residues 312–334 (ALEVVILKTLHMFEVPFLLVGCF). Topologically, residues 335-346 (KYITSQFEVRFS) are cytoplasmic. A helical transmembrane segment spans residues 347 to 374 (ATIYLVCFCFFKQLAMIFMSVLAGNMYE). Residues 375 to 377 (SIG) are Periplasmic-facing. Residues 378–398 (FQGAYLVLGLVALGFTLISVF) form a helical membrane-spanning segment. Topologically, residues 399–417 (TLSGPGPLSLLRRQVNEVA) are cytoplasmic.

In terms of assembly, monomer.

It is found in the cell inner membrane. It carries out the reaction lactose(in) + H(+)(in) = lactose(out) + H(+)(out). It catalyses the reaction melibiose(in) + H(+)(in) = melibiose(out) + H(+)(out). Inhibited by the proton ionophore carbonyl cyanide m-chlorophenylhydrazone (CCCP). Its function is as follows. Responsible for transport of beta-galactosides into the cell, with the concomitant import of a proton (symport system). Can transport lactose, melibiose, the synthetic disaccharide lactulose or the analog methyl-1-thio-beta,D-galactopyranoside (TMG), but not sucrose or fructose. The substrate specificity is directed toward the galactopyranosyl moiety of the substrate. The chain is Lactose permease from Escherichia coli (strain K12).